Consider the following 190-residue polypeptide: Hypoxanthine/guanine phosphoribosyltransferase (190 aa).

Belongs to the purine/pyrimidine phosphoribosyltransferase family. Archaeal HPRT subfamily. Homodimer.

It localises to the cytoplasm. The catalysed reaction is IMP + diphosphate = hypoxanthine + 5-phospho-alpha-D-ribose 1-diphosphate. The enzyme catalyses GMP + diphosphate = guanine + 5-phospho-alpha-D-ribose 1-diphosphate. It functions in the pathway purine metabolism; IMP biosynthesis via salvage pathway; IMP from hypoxanthine: step 1/1. Its function is as follows. Catalyzes a salvage reaction resulting in the formation of IMP that is energically less costly than de novo synthesis. This chain is Hypoxanthine/guanine phosphoribosyltransferase, found in Methanohalophilus mahii (strain ATCC 35705 / DSM 5219 / SLP).